The chain runs to 105 residues: Transcription factor S (105 aa).

Residues cysteine 5, cysteine 8, cysteine 21, cysteine 24, cysteine 66, cysteine 69, cysteine 94, and cysteine 97 each coordinate Zn(2+). The C4-type zinc-finger motif lies at cysteine 5–cysteine 24. Residues threonine 62–arginine 102 form a TFIIS-type zinc finger.

The protein belongs to the archaeal RpoM/eukaryotic RPA12/RPB9/RPC11 RNA polymerase family.

Its function is as follows. Induces RNA cleavage activity in the RNA polymerase. In its presence, the cleavage activity of the RNA polymerase truncates the RNA back to position +15 in a stepwise manner by releasing mainly dinucleotides from the 3'-end of the nascent RNA. The truncated RNAs are able to continue elongation. Involved in transcriptional proofreading and fidelity. Misincorporation of nucleotides during elongation of transcription leads to arrested elongation complexes which are rescued by TFS-promoted removal of a dinucleotide from the 3'-end. TFS is able to induce a cleavage resynthesis cycle in stalled elongation complexes (resulting from the next missing nucleotide or a reduced incorporation rate of a wrong nucleotide) preventing misincorporation and enabling proofreading in a post-incorporation manner. Pausing of elongation complexes is the main determinant of TFS-induced RNA cleavage. The polypeptide is Transcription factor S (Methanothermococcus thermolithotrophicus (Methanococcus thermolithotrophicus)).